A 427-amino-acid chain; its full sequence is Serine--tRNA ligase (427 aa).

230–232 (TSE) contacts L-serine. Position 261-263 (261-263 (RSE)) interacts with ATP. Glutamate 284 is a binding site for L-serine. An ATP-binding site is contributed by 348–351 (EISS). Serine 384 is an L-serine binding site.

This sequence belongs to the class-II aminoacyl-tRNA synthetase family. Type-1 seryl-tRNA synthetase subfamily. In terms of assembly, homodimer. The tRNA molecule binds across the dimer.

The protein resides in the cytoplasm. It catalyses the reaction tRNA(Ser) + L-serine + ATP = L-seryl-tRNA(Ser) + AMP + diphosphate + H(+). The enzyme catalyses tRNA(Sec) + L-serine + ATP = L-seryl-tRNA(Sec) + AMP + diphosphate + H(+). The protein operates within aminoacyl-tRNA biosynthesis; selenocysteinyl-tRNA(Sec) biosynthesis; L-seryl-tRNA(Sec) from L-serine and tRNA(Sec): step 1/1. In terms of biological role, catalyzes the attachment of serine to tRNA(Ser). Is also able to aminoacylate tRNA(Sec) with serine, to form the misacylated tRNA L-seryl-tRNA(Sec), which will be further converted into selenocysteinyl-tRNA(Sec). The chain is Serine--tRNA ligase from Desulforapulum autotrophicum (strain ATCC 43914 / DSM 3382 / VKM B-1955 / HRM2) (Desulfobacterium autotrophicum).